The primary structure comprises 367 residues: Phosphoribosylaminoimidazole-succinocarboxamide synthase (367 aa).

This sequence belongs to the SAICAR synthetase family.

The catalysed reaction is 5-amino-1-(5-phospho-D-ribosyl)imidazole-4-carboxylate + L-aspartate + ATP = (2S)-2-[5-amino-1-(5-phospho-beta-D-ribosyl)imidazole-4-carboxamido]succinate + ADP + phosphate + 2 H(+). It functions in the pathway purine metabolism; IMP biosynthesis via de novo pathway; 5-amino-1-(5-phospho-D-ribosyl)imidazole-4-carboxamide from 5-amino-1-(5-phospho-D-ribosyl)imidazole-4-carboxylate: step 1/2. The protein is Phosphoribosylaminoimidazole-succinocarboxamide synthase of Colwellia psychrerythraea (strain 34H / ATCC BAA-681) (Vibrio psychroerythus).